We begin with the raw amino-acid sequence, 540 residues long: E3 ubiquitin-protein ligase rnf8-A (540 aa).

An FHA domain is found at Val30 to Leu84. Residues Leu128–Ser205 form a disordered region. Composition is skewed to polar residues over residues Ala152–Ser162 and Ser179–Ser200. The RING-type zinc-finger motif lies at Cys382–Arg420. The disordered stretch occupies residues Gly517–Ile540. Acidic residues predominate over residues Asp519 to Ile540.

It belongs to the RNF8 family. Homodimer. Forms a E2-E3 ubiquitin ligase complex composed of the rnf8 homodimer and a E2 heterodimer of ube2n and ube2v2.

It localises to the nucleus. The enzyme catalyses S-ubiquitinyl-[E2 ubiquitin-conjugating enzyme]-L-cysteine + [acceptor protein]-L-lysine = [E2 ubiquitin-conjugating enzyme]-L-cysteine + N(6)-ubiquitinyl-[acceptor protein]-L-lysine.. It functions in the pathway protein modification; protein ubiquitination. In terms of biological role, E3 ubiquitin-protein ligase that plays a key role in DNA damage signaling via 2 distinct roles: by mediating the 'Lys-63'-linked ubiquitination of histones H2A and H2AX and promoting the recruitment of DNA repair proteins at double-strand breaks (DSBs) sites, and by catalyzing 'Lys-48'-linked ubiquitination to remove target proteins from DNA damage sites. Following DNA DSBs, it is recruited to the sites of damage by ATM-phosphorylated mdc1 and catalyzes the 'Lys-63'-linked ubiquitination of histones H2A and H2AX, thereby promoting the formation of tp53bp1 and brca1 ionizing radiation-induced foci (IRIF). H2A ubiquitination also mediates the ATM-dependent transcriptional silencing at regions flanking DSBs in cis, a mechanism to avoid collision between transcription and repair intermediates. Also catalyzes the formation of 'Lys-48'-linked polyubiquitin chains, leading to degradation of substrate proteins. In addition to its function in damage signaling, also plays a role in higher-order chromatin structure by mediating extensive chromatin decondensation. The polypeptide is E3 ubiquitin-protein ligase rnf8-A (Xenopus laevis (African clawed frog)).